Consider the following 332-residue polypeptide: Sesquiterpene synthase MBR_10393 (332 aa).

The Mg(2+) site is built by D91 and D96. Residues 91 to 96 (DDLFVD) carry the DDXXXD motif motif. R184 serves as a coordination point for substrate. 3 residues coordinate Mg(2+): N230, S234, and E238.

Belongs to the terpene synthase family. It depends on Mg(2+) as a cofactor.

The enzyme catalyses (2E,6E)-farnesyl diphosphate + H2O = (+)-corvol ether B + diphosphate. It carries out the reaction (2E,6E)-farnesyl diphosphate + H2O = (+)-corvol ether A + diphosphate. Terpene synthase that catalyzes the conversion of (2E,6E)-farnesyl diphosphate (FPP) into sesquiterpenes which are important for fungi-environment interactions. Produces a mixture consisting of 8 sesquiterpenes including corvol ethers A and B, as well as traces of epizonarene, gamma-cadinene, delta-cadinene, alpha-cadinene, alpha-cadinol, and an unidentified sesquiterpene. The major product is corvol ether B. The polypeptide is Sesquiterpene synthase MBR_10393 (Metarhizium brunneum (strain ARSEF 3297)).